The sequence spans 285 residues: 4-diphosphocytidyl-2-C-methyl-D-erythritol kinase (285 aa).

Lys-10 is a catalytic residue. An ATP-binding site is contributed by 92-102 (PFGAGLGGGSS). Asp-134 is a catalytic residue.

It belongs to the GHMP kinase family. IspE subfamily.

It catalyses the reaction 4-CDP-2-C-methyl-D-erythritol + ATP = 4-CDP-2-C-methyl-D-erythritol 2-phosphate + ADP + H(+). Its pathway is isoprenoid biosynthesis; isopentenyl diphosphate biosynthesis via DXP pathway; isopentenyl diphosphate from 1-deoxy-D-xylulose 5-phosphate: step 3/6. In terms of biological role, catalyzes the phosphorylation of the position 2 hydroxy group of 4-diphosphocytidyl-2C-methyl-D-erythritol. The protein is 4-diphosphocytidyl-2-C-methyl-D-erythritol kinase of Chloroherpeton thalassium (strain ATCC 35110 / GB-78).